We begin with the raw amino-acid sequence, 123 residues long: Non-specific lipid-transfer protein (123 aa).

The N-terminal stretch at 1–25 (MAVKKMVEAVFVVGLVVTMMNVWGA) is a signal peptide. 4 disulfides stabilise this stretch: Cys-34–Cys-82, Cys-44–Cys-59, Cys-60–Cys-104, and Cys-80–Cys-119.

It belongs to the plant LTP family.

Its function is as follows. Plant non-specific lipid-transfer proteins transfer phospholipids as well as galactolipids across membranes. May play a role in wax or cutin deposition in the cell walls of expanding epidermal cells and certain secretory tissues. In Pinus taeda (Loblolly pine), this protein is Non-specific lipid-transfer protein.